The sequence spans 37 residues: Large ribosomal subunit protein bL36 (37 aa).

Belongs to the bacterial ribosomal protein bL36 family.

In Synechococcus sp. (strain CC9311), this protein is Large ribosomal subunit protein bL36.